A 430-amino-acid chain; its full sequence is Tol-Pal system protein TolB (430 aa).

The first 21 residues, Met-1–Ala-21, serve as a signal peptide directing secretion.

This sequence belongs to the TolB family. The Tol-Pal system is composed of five core proteins: the inner membrane proteins TolA, TolQ and TolR, the periplasmic protein TolB and the outer membrane protein Pal. They form a network linking the inner and outer membranes and the peptidoglycan layer.

The protein resides in the periplasm. Functionally, part of the Tol-Pal system, which plays a role in outer membrane invagination during cell division and is important for maintaining outer membrane integrity. TolB occupies a key intermediary position in the Tol-Pal system because it communicates directly with both membrane-embedded components, Pal in the outer membrane and TolA in the inner membrane. In Escherichia coli O8 (strain IAI1), this protein is Tol-Pal system protein TolB.